A 313-amino-acid chain; its full sequence is Pyrimidine-specific ribonucleoside hydrolase RihB (313 aa).

The Proton acceptor role is filled by D11. Residues D11, D16, and V124 each contribute to the Ca(2+) site. Residues Q227 and H239 each contribute to the substrate site. Ca(2+) is bound at residue D240.

This sequence belongs to the IUNH family. RihB subfamily. As to quaternary structure, homotetramer. The cofactor is Ca(2+).

The enzyme catalyses a pyrimidine ribonucleoside + H2O = a pyrimidine nucleobase + D-ribose. Hydrolyzes cytidine or uridine to ribose and cytosine or uracil, respectively. Has a clear preference for cytidine over uridine. Strictly specific for ribonucleosides. The chain is Pyrimidine-specific ribonucleoside hydrolase RihB from Escherichia coli (strain K12 / DH10B).